Reading from the N-terminus, the 312-residue chain is Elongation factor Ts (312 aa).

The segment at threonine 84–valine 87 is involved in Mg(2+) ion dislocation from EF-Tu.

The protein belongs to the EF-Ts family.

The protein localises to the cytoplasm. Functionally, associates with the EF-Tu.GDP complex and induces the exchange of GDP to GTP. It remains bound to the aminoacyl-tRNA.EF-Tu.GTP complex up to the GTP hydrolysis stage on the ribosome. The protein is Elongation factor Ts of Caulobacter vibrioides (strain ATCC 19089 / CIP 103742 / CB 15) (Caulobacter crescentus).